The following is a 442-amino-acid chain: MSHEEDLIDYSDEELQATDAAAGTAAAGANGAAPKKEGDLTVSGARADKKGSYVGIHSTGFRDFLLKGELLRAITDCGFEHPSEVQQVCIPTAILNVDVLCQAKSGLGKTAVFVLTTLHQLEPVPGECSILVMCHTRELAYQIKNEYARFSKYLPDVKTAVFYGGTPMQKDIELLSSKDTYPSIVVGTPGRLNALVRDKKLSLRNIKAFVLDECDKMLDQIDMRRDVQEIFRATPADKQVMMFSATLSQEVRPICKKFMRNPLEVYVDDDTKLTLHGLLQYYIKLGESEKNRKLNELLDSLEFNQVIIFVKSTQRASELDKLLRECNFPSIAVHSGVSQEERIKRYKEFKEFNKRICVATDVFGRGIDIERINLAINYDLPADADSYLHRVGRAGRFGTKGLAISFVSSEQDQEVLKDIEKRFEVALPEYPQGGVDSSAYMA.

Positions 59 to 87 (TGFRDFLLKGELLRAITDCGFEHPSEVQQ) match the Q motif motif. One can recognise a Helicase ATP-binding domain in the interval 90 to 265 (IPTAILNVDV…KKFMRNPLEV (176 aa)). 103–110 (AKSGLGKT) provides a ligand contact to ATP. Residues 212–215 (DECD) carry the DECD box motif. Residues 293–438 (KLNELLDSLE…EYPQGGVDSS (146 aa)) enclose the Helicase C-terminal domain.

Belongs to the DEAD box helicase family. DECD subfamily.

The protein resides in the nucleus. It carries out the reaction ATP + H2O = ADP + phosphate + H(+). Functionally, ATP-binding RNA helicase involved in transcription elongation and required for the export of mRNA out of the nucleus. SUB2 also plays a role in pre-mRNA splicing and spliceosome assembly. May be involved in rDNA and telomeric silencing, and maintenance of genome integrity. The polypeptide is ATP-dependent RNA helicase SUB2 (SUB2) (Ajellomyces capsulatus (strain NAm1 / WU24) (Darling's disease fungus)).